Here is a 316-residue protein sequence, read N- to C-terminus: Protoheme IX farnesyltransferase (316 aa).

A run of 9 helical transmembrane segments spans residues 32 to 52, 53 to 73, 98 to 118, 120 to 140, 153 to 173, 180 to 200, 226 to 246, 251 to 271, and 280 to 300; these read VMSL…THVN, PIIG…SGAL, VARE…VITL, FVAN…YVVI, IVIG…AVAG, LALF…LALV, ILLY…IGFA, GLLS…VYLA, and VAMR…AAIV.

This sequence belongs to the UbiA prenyltransferase family. Protoheme IX farnesyltransferase subfamily.

Its subcellular location is the cell inner membrane. The catalysed reaction is heme b + (2E,6E)-farnesyl diphosphate + H2O = Fe(II)-heme o + diphosphate. It participates in porphyrin-containing compound metabolism; heme O biosynthesis; heme O from protoheme: step 1/1. In terms of biological role, converts heme B (protoheme IX) to heme O by substitution of the vinyl group on carbon 2 of heme B porphyrin ring with a hydroxyethyl farnesyl side group. The protein is Protoheme IX farnesyltransferase of Methylocella silvestris (strain DSM 15510 / CIP 108128 / LMG 27833 / NCIMB 13906 / BL2).